We begin with the raw amino-acid sequence, 488 residues long: Inosine-5'-monophosphate dehydrogenase (488 aa).

2 CBS domains span residues 93–149 (VVTD…NQPV) and 153–214 (MTPK…CKDE). Residues Asp-248 and 248 to 250 (DSS) contribute to the NAD(+) site. At Lys-267 the chain carries N6-acetyllysine. Residue 298-300 (GIG) participates in NAD(+) binding. Gly-300 and Gly-302 together coordinate K(+). IMP is bound at residue Ser-303. Cys-305 contacts K(+). Catalysis depends on Cys-305, which acts as the Thioimidate intermediate. IMP contacts are provided by residues 338–340 (DGG), 361–362 (GS), and 385–389 (YRGMG). Arg-401 functions as the Proton acceptor in the catalytic mechanism. Glu-415 lines the IMP pocket. Lys-428 carries the post-translational modification N6-acetyllysine. Residues Glu-469, Ser-470, and His-471 each coordinate K(+).

It belongs to the IMPDH/GMPR family. Homotetramer. It depends on K(+) as a cofactor.

The enzyme catalyses IMP + NAD(+) + H2O = XMP + NADH + H(+). It functions in the pathway purine metabolism; XMP biosynthesis via de novo pathway; XMP from IMP: step 1/1. With respect to regulation, mycophenolic acid (MPA) is a non-competitive inhibitor that prevents formation of the closed enzyme conformation by binding to the same site as the amobile flap. In contrast, mizoribine monophosphate (MZP) is a competitive inhibitor that induces the closed conformation. MPA is a potent inhibitor of mammalian IMPDHs but a poor inhibitor of the bacterial enzymes. MZP is a more potent inhibitor of bacterial IMPDH. Its function is as follows. Catalyzes the conversion of inosine 5'-phosphate (IMP) to xanthosine 5'-phosphate (XMP), the first committed and rate-limiting step in the de novo synthesis of guanine nucleotides, and therefore plays an important role in the regulation of cell growth. This Escherichia coli O157:H7 protein is Inosine-5'-monophosphate dehydrogenase.